A 574-amino-acid polypeptide reads, in one-letter code: Proline--tRNA ligase (574 aa).

The protein belongs to the class-II aminoacyl-tRNA synthetase family. ProS type 1 subfamily. In terms of assembly, homodimer.

The protein localises to the cytoplasm. The enzyme catalyses tRNA(Pro) + L-proline + ATP = L-prolyl-tRNA(Pro) + AMP + diphosphate. Its function is as follows. Catalyzes the attachment of proline to tRNA(Pro) in a two-step reaction: proline is first activated by ATP to form Pro-AMP and then transferred to the acceptor end of tRNA(Pro). As ProRS can inadvertently accommodate and process non-cognate amino acids such as alanine and cysteine, to avoid such errors it has two additional distinct editing activities against alanine. One activity is designated as 'pretransfer' editing and involves the tRNA(Pro)-independent hydrolysis of activated Ala-AMP. The other activity is designated 'posttransfer' editing and involves deacylation of mischarged Ala-tRNA(Pro). The misacylated Cys-tRNA(Pro) is not edited by ProRS. The chain is Proline--tRNA ligase from Sodalis glossinidius (strain morsitans).